Consider the following 42-residue polypeptide: Potassium channel gamma toxin gamma-KTx 1.9 (42 aa).

Disulfide bonds link Cys5–Cys23, Cys11–Cys34, Cys20–Cys39, and Cys24–Cys41.

This sequence belongs to the ergtoxin family. Gamma-KTx 1 subfamily. As to expression, expressed by the venom gland.

Its subcellular location is the secreted. Functionally, blocks human voltage-gated potassium channel Kv11.1/KCNH2/ERG1 (IC(50)=16.9 nM). This Centruroides tecomanus (Scorpion) protein is Potassium channel gamma toxin gamma-KTx 1.9.